A 343-amino-acid polypeptide reads, in one-letter code: SET and MYND domain-containing protein DDB_G0292454 (343 aa).

Residues 77-307 (EPFISYPSII…PGDEITISYT (231 aa)) enclose the SET domain. 8 residues coordinate Zn(2+): C93, C96, C111, C114, C120, C124, H133, and C137. The MYND-type zinc-finger motif lies at 93-137 (CNHCLKEIKKEEEEIKQECEECKVYKYCSIECKEKSSIEYHSVLC).

This sequence belongs to the class V-like SAM-binding methyltransferase superfamily.

In terms of biological role, probable methyltransferase. This Dictyostelium discoideum (Social amoeba) protein is SET and MYND domain-containing protein DDB_G0292454.